A 57-amino-acid polypeptide reads, in one-letter code: Potassium channel toxin alpha-KTx 8.7 (57 aa).

The first 28 residues, 1–28, serve as a signal peptide directing secretion; it reads MSRLYAIILIALVFNVIMTIMPDMKVEA. Disulfide bonds link Cys31-Cys47, Cys34-Cys52, and Cys38-Cys54.

Expressed by the venom gland.

It is found in the secreted. Inhibits voltage-gated potassium channel rKv1.1/KCNA1 at nanomolar ranges (IC(50)=8.5 nM). The protein is Potassium channel toxin alpha-KTx 8.7 of Mesobuthus eupeus (Lesser Asian scorpion).